Consider the following 154-residue polypeptide: MPNTDVSSLSMLGQQTETAQSPEEAVLEKVPSNHAGTDYVVRFTAPEFTSLCPMTGQPDFAHIVIDYIPGEWLVESKSLKLFLHSFRNHGAFHEDCSIYIAKRIVELLDPRWLRIGAYWYPRGGIPIDVFWQTGKPPEGVWLPEQGVATYRGRG.

Positions 1-21 (MPNTDVSSLSMLGQQTETAQS) are enriched in polar residues. Positions 1 to 28 (MPNTDVSSLSMLGQQTETAQSPEEAVLE) are disordered. The active-site Thioimide intermediate is the C52. Residue D59 is the Proton donor of the active site. Substrate-binding positions include 74-76 (VES) and 93-94 (HE).

Belongs to the GTP cyclohydrolase I family. QueF type 1 subfamily.

The protein resides in the cytoplasm. The enzyme catalyses 7-aminomethyl-7-carbaguanine + 2 NADP(+) = 7-cyano-7-deazaguanine + 2 NADPH + 3 H(+). The protein operates within tRNA modification; tRNA-queuosine biosynthesis. Functionally, catalyzes the NADPH-dependent reduction of 7-cyano-7-deazaguanine (preQ0) to 7-aminomethyl-7-deazaguanine (preQ1). This is NADPH-dependent 7-cyano-7-deazaguanine reductase from Rhizobium johnstonii (strain DSM 114642 / LMG 32736 / 3841) (Rhizobium leguminosarum bv. viciae).